A 149-amino-acid chain; its full sequence is Large ribosomal subunit protein uL13 (149 aa).

The protein belongs to the universal ribosomal protein uL13 family. In terms of assembly, part of the 50S ribosomal subunit.

In terms of biological role, this protein is one of the early assembly proteins of the 50S ribosomal subunit, although it is not seen to bind rRNA by itself. It is important during the early stages of 50S assembly. This Prosthecochloris aestuarii (strain DSM 271 / SK 413) protein is Large ribosomal subunit protein uL13.